The following is a 261-amino-acid chain: 1-(5-phosphoribosyl)-5-[(5-phosphoribosylamino)methylideneamino] imidazole-4-carboxamide isomerase (261 aa).

D8 (proton acceptor) is an active-site residue. D130 acts as the Proton donor in catalysis.

The protein belongs to the HisA/HisF family.

The protein resides in the cytoplasm. It carries out the reaction 1-(5-phospho-beta-D-ribosyl)-5-[(5-phospho-beta-D-ribosylamino)methylideneamino]imidazole-4-carboxamide = 5-[(5-phospho-1-deoxy-D-ribulos-1-ylimino)methylamino]-1-(5-phospho-beta-D-ribosyl)imidazole-4-carboxamide. Its pathway is amino-acid biosynthesis; L-histidine biosynthesis; L-histidine from 5-phospho-alpha-D-ribose 1-diphosphate: step 4/9. The chain is 1-(5-phosphoribosyl)-5-[(5-phosphoribosylamino)methylideneamino] imidazole-4-carboxamide isomerase from Prosthecochloris aestuarii (strain DSM 271 / SK 413).